Consider the following 436-residue polypeptide: UPF0597 protein YhaM (436 aa).

Belongs to the UPF0597 family.

The polypeptide is UPF0597 protein YhaM (Shigella boydii serotype 4 (strain Sb227)).